Reading from the N-terminus, the 745-residue chain is Heterogeneous nuclear ribonucleoprotein U-like protein 2 (745 aa).

An SAP domain is found at 3–37 (VKRLKVTELRSELQRRGLDSRGLKMDLAQRLQEAL). Disordered stretches follow at residues 44 to 239 (DEAG…DEEE) and 625 to 664 (EEARKLLPPSEKRTNRRNNRNKRNRQNRSRGQGYVGGQRR). Residues 73–97 (GDEEEEDDDEEEDEEALLEDEDEEP) show a composition bias toward acidic residues. Over residues 142 to 161 (GEEHDNGKGEEDGPEERSGD) the composition is skewed to basic and acidic residues. A Phosphoserine modification is found at Ser159. Phosphothreonine is present on Thr163. Ser166, Ser183, Ser186, Ser224, and Ser226 each carry phosphoserine. The span at 183-221 (SEKSKPAGSDGERRGVKRQRDEKDEHGRAYYEFREEAYH) shows a compositional bias: basic and acidic residues. A B30.2/SPRY domain is found at 224–417 (SKSPPPPEEE…VELNFGQKEE (194 aa)). Over residues 230 to 239 (PEEEAKDEEE) the composition is skewed to acidic residues. A compositionally biased stretch (basic and acidic residues) spans 625 to 637 (EEARKLLPPSEKR). Positions 638 to 652 (TNRRNNRNKRNRQNR) are enriched in basic residues. Omega-N-methylarginine occurs at positions 654, 682, 736, and 745.

In terms of assembly, binds to MLF1 and retains it in the nucleus.

The protein localises to the nucleus. The chain is Heterogeneous nuclear ribonucleoprotein U-like protein 2 (Hnrnpul2) from Mus musculus (Mouse).